Reading from the N-terminus, the 174-residue chain is Peptide methionine sulfoxide reductase MsrA (174 aa).

Cys11 is a catalytic residue.

It belongs to the MsrA Met sulfoxide reductase family.

It carries out the reaction L-methionyl-[protein] + [thioredoxin]-disulfide + H2O = L-methionyl-(S)-S-oxide-[protein] + [thioredoxin]-dithiol. The enzyme catalyses [thioredoxin]-disulfide + L-methionine + H2O = L-methionine (S)-S-oxide + [thioredoxin]-dithiol. Functionally, has an important function as a repair enzyme for proteins that have been inactivated by oxidation. Catalyzes the reversible oxidation-reduction of methionine sulfoxide in proteins to methionine. The protein is Peptide methionine sulfoxide reductase MsrA of Nitratiruptor sp. (strain SB155-2).